Consider the following 203-residue polypeptide: Signal peptidase I (203 aa).

A disordered region spans residues M1–S26. Over M1 to K33 the chain is Cytoplasmic. A compositionally biased stretch (low complexity) spans P17–S26. The helical transmembrane segment at T34–A50 threads the bilayer. At E51–Y203 the chain is on the extracellular side. Catalysis depends on residues S59 and K109.

It belongs to the peptidase S26 family.

The protein localises to the cell membrane. The catalysed reaction is Cleavage of hydrophobic, N-terminal signal or leader sequences from secreted and periplasmic proteins.. This is Signal peptidase I (lepB) from Leptolyngbya laminosa (Phormidium laminosum).